We begin with the raw amino-acid sequence, 135 residues long: UPF0329 protein ECU07_1860/ECU10_0040/ECU11_2100 (135 aa).

Belongs to the UPF0329 family.

This is UPF0329 protein ECU07_1860/ECU10_0040/ECU11_2100 from Encephalitozoon cuniculi (strain GB-M1) (Microsporidian parasite).